The primary structure comprises 967 residues: Isoleucine--tRNA ligase (967 aa).

The 'HIGH' region motif lies at 68–78 (PYANGTLHMGH). Glu-583 provides a ligand contact to L-isoleucyl-5'-AMP. The 'KMSKS' region motif lies at 624-628 (KMSKS). Lys-627 provides a ligand contact to ATP. Residues Cys-937, Cys-940, Cys-957, and Cys-960 each coordinate Zn(2+).

It belongs to the class-I aminoacyl-tRNA synthetase family. IleS type 1 subfamily. In terms of assembly, monomer. Requires Zn(2+) as cofactor.

Its subcellular location is the cytoplasm. It catalyses the reaction tRNA(Ile) + L-isoleucine + ATP = L-isoleucyl-tRNA(Ile) + AMP + diphosphate. Catalyzes the attachment of isoleucine to tRNA(Ile). As IleRS can inadvertently accommodate and process structurally similar amino acids such as valine, to avoid such errors it has two additional distinct tRNA(Ile)-dependent editing activities. One activity is designated as 'pretransfer' editing and involves the hydrolysis of activated Val-AMP. The other activity is designated 'posttransfer' editing and involves deacylation of mischarged Val-tRNA(Ile). The sequence is that of Isoleucine--tRNA ligase from Prochlorococcus marinus (strain NATL2A).